We begin with the raw amino-acid sequence, 96 residues long: uncharacterized protein (96 aa).

An N-terminal signal peptide occupies residues 1 to 19 (MKQIIPALITLSFSPMAIA).

This is an uncharacterized protein from Synechocystis sp. (strain ATCC 27184 / PCC 6803 / Kazusa).